The following is a 252-amino-acid chain: uncharacterized protein (252 aa).

It belongs to the LarE family.

This is an uncharacterized protein from Methanocaldococcus jannaschii (strain ATCC 43067 / DSM 2661 / JAL-1 / JCM 10045 / NBRC 100440) (Methanococcus jannaschii).